We begin with the raw amino-acid sequence, 325 residues long: Small ribosomal subunit protein RACK1 (325 aa).

7 WD repeats span residues 13-44 (AHTD…ILWH), 61-91 (GHSH…RLWD), 103-133 (GHTK…KLWN), 147-179 (AHSD…KVWN), 191-221 (GHSG…LLWD), 232-261 (DAGS…KIWD), and 291-321 (KKVI…RVWG).

This sequence belongs to the WD repeat G protein beta family. Ribosomal protein RACK1 subfamily.

Plays a role in hormone-mediated cell division. The protein is Small ribosomal subunit protein RACK1 (GB1) of Medicago sativa (Alfalfa).